The following is a 178-amino-acid chain: NADPH azoreductase (178 aa).

106-111 contacts NADP(+); that stretch reads GGGKGG.

The protein belongs to the azoreductase type 2 family. Monomer.

It catalyses the reaction N,N-dimethyl-1,4-phenylenediamine + aniline + 2 NADP(+) = 4-(dimethylamino)azobenzene + 2 NADPH + 2 H(+). Functionally, catalyzes the reductive cleavage of azo bond in aromatic azo compounds to the corresponding amines. Requires NADPH as an electron donor for its activity. Compounds with paired naphthalene groups coupled with the azo group are good substrates, with the following preference order: Rocceline &gt; Sumifix Black B &gt; Solar Orange. The chain is NADPH azoreductase (azr) from Bacillus sp. (strain OY1-2).